Consider the following 231-residue polypeptide: Ureidoacrylate amidohydrolase RutB (231 aa).

The active-site Proton acceptor is the D25. K134 is an active-site residue. Catalysis depends on C167, which acts as the Nucleophile.

It belongs to the isochorismatase family. RutB subfamily.

It carries out the reaction (Z)-3-ureidoacrylate + H2O + H(+) = (Z)-3-aminoacrylate + NH4(+) + CO2. The enzyme catalyses (Z)-3-ureidoacrylate + H2O = (Z)-3-aminoacrylate + carbamate + H(+). The catalysed reaction is (Z)-2-methylureidoacrylate + H2O + H(+) = (Z)-2-methylaminoacrylate + NH4(+) + CO2. Hydrolyzes ureidoacrylate to form aminoacrylate and carbamate. The carbamate hydrolyzes spontaneously, thereby releasing one of the nitrogen atoms of the pyrimidine ring as ammonia and one of its carbon atoms as CO2. This chain is Ureidoacrylate amidohydrolase RutB, found in Escherichia coli O18:K1:H7 (strain IHE3034 / ExPEC).